Consider the following 290-residue polypeptide: Undecaprenyl-diphosphatase (290 aa).

The next 6 helical transmembrane spans lie at 39–59 (PGAA…LIYF), 85–105 (AQMG…GITL), 118–138 (LIAT…RLAA), 202–222 (SFLL…KDVG), 230–250 (PTIF…AWFM), and 261–281 (FVIY…AGVL).

This sequence belongs to the UppP family.

It is found in the cell membrane. The enzyme catalyses di-trans,octa-cis-undecaprenyl diphosphate + H2O = di-trans,octa-cis-undecaprenyl phosphate + phosphate + H(+). Its function is as follows. Catalyzes the dephosphorylation of undecaprenyl diphosphate (UPP). Confers resistance to bacitracin. The sequence is that of Undecaprenyl-diphosphatase from Streptomyces griseus subsp. griseus (strain JCM 4626 / CBS 651.72 / NBRC 13350 / KCC S-0626 / ISP 5235).